Reading from the N-terminus, the 115-residue chain is U3-lycotoxin-Ls1f (115 aa).

Positions 1–20 (MKFVLLFGVLLVTLFSYSSA) are cleaved as a signal peptide. Residues 21-44 (EMLDDFDQADEDELLSLIEKEEAR) constitute a propeptide that is removed on maturation. 4 disulfide bridges follow: cysteine 48–cysteine 63, cysteine 55–cysteine 72, cysteine 62–cysteine 87, and cysteine 74–cysteine 85.

Belongs to the neurotoxin 19 (CSTX) family. 01 subfamily. In terms of tissue distribution, expressed by the venom gland.

It localises to the secreted. The polypeptide is U3-lycotoxin-Ls1f (Lycosa singoriensis (Wolf spider)).